Consider the following 201-residue polypeptide: 3-isopropylmalate dehydratase small subunit (201 aa).

It belongs to the LeuD family. LeuD type 1 subfamily. Heterodimer of LeuC and LeuD.

The enzyme catalyses (2R,3S)-3-isopropylmalate = (2S)-2-isopropylmalate. The protein operates within amino-acid biosynthesis; L-leucine biosynthesis; L-leucine from 3-methyl-2-oxobutanoate: step 2/4. Catalyzes the isomerization between 2-isopropylmalate and 3-isopropylmalate, via the formation of 2-isopropylmaleate. The chain is 3-isopropylmalate dehydratase small subunit from Escherichia coli O9:H4 (strain HS).